The sequence spans 247 residues: Carboxy-S-adenosyl-L-methionine synthase (247 aa).

S-adenosyl-L-methionine is bound by residues Tyr-38, 63 to 65, Asn-131, and Arg-198; that span reads GCS.

The protein belongs to the class I-like SAM-binding methyltransferase superfamily. Cx-SAM synthase family. In terms of assembly, homodimer.

The catalysed reaction is prephenate + S-adenosyl-L-methionine = carboxy-S-adenosyl-L-methionine + 3-phenylpyruvate + H2O. In terms of biological role, catalyzes the conversion of S-adenosyl-L-methionine (SAM) to carboxy-S-adenosyl-L-methionine (Cx-SAM). This is Carboxy-S-adenosyl-L-methionine synthase from Desulforapulum autotrophicum (strain ATCC 43914 / DSM 3382 / VKM B-1955 / HRM2) (Desulfobacterium autotrophicum).